We begin with the raw amino-acid sequence, 137 residues long: uncharacterized protein (137 aa).

Positions 4–118 (YEGNCLCKAI…CIDDKPDCYD (115 aa)) constitute a CENP-V/GFA domain. Positions 8, 10, 27, 29, 32, 71, and 74 each coordinate Zn(2+).

This sequence belongs to the Gfa family. Requires Zn(2+) as cofactor.

It is found in the cytoplasm. It localises to the nucleus. This is an uncharacterized protein from Schizosaccharomyces pombe (strain 972 / ATCC 24843) (Fission yeast).